Consider the following 161-residue polypeptide: Periplasmic chaperone Spy (161 aa).

A signal peptide spans 1–23 (MRKLTALFVASTLALGAANLAHA). A disordered region spans residues 140-161 (ANFEKRLTERPAAKGKMPATAE). Over residues 142-151 (FEKRLTERPA) the composition is skewed to basic and acidic residues.

Belongs to the CpxP/Spy family. In terms of assembly, homodimer.

Its subcellular location is the periplasm. An ATP-independent periplasmic chaperone, decreases protein aggregation and helps protein refolding. Binds substrate over a large region of its convex inner surface. Substrate protein folds while it is bound to chaperone. Increasing Spy flexibility increases its substrate affinity and overall chaperone activity (shown for 3 different substrates). Protects proteins in vitro against tannin inactivation; tannins have antimicrobial activity. Overexpression enhances the stability of otherwise unstable periplasmic proteins. This Escherichia coli (strain K12) protein is Periplasmic chaperone Spy.